Reading from the N-terminus, the 113-residue chain is uncharacterized protein (113 aa).

A disordered region spans residues 94–113; it reads SKTGLDEQAHVQKAHDVQDV. Over residues 96 to 113 the composition is skewed to basic and acidic residues; the sequence is TGLDEQAHVQKAHDVQDV.

It belongs to the geminiviridae protein AV2/V2 family. Interacts with host SGS3.

It localises to the host cytoplasm. It is found in the host perinuclear region. Through its interaction with host SGS3, acts as a suppressor of RNA-mediated gene silencing, also known as post-transcriptional gene silencing (PTGS), a mechanism of plant viral defense that limits the accumulation of viral RNAs. This is an uncharacterized protein from African cassava mosaic virus (isolate Nigerian) (ACMV).